Here is a 254-residue protein sequence, read N- to C-terminus: Nickel import ATP-binding protein NikD (254 aa).

Residues 2-241 form the ABC transporter domain; sequence PQQIELRDIA…PKHAVTRSLV (240 aa). Residue 36-43 coordinates ATP; sequence GGSGSGKS.

It belongs to the ABC transporter superfamily. Nickel importer (TC 3.A.1.5.3) family. The complex is composed of two ATP-binding proteins (NikD and NikE), two transmembrane proteins (NikB and NikC) and a solute-binding protein (NikA).

It localises to the cell inner membrane. It carries out the reaction Ni(2+)(out) + ATP + H2O = Ni(2+)(in) + ADP + phosphate + H(+). In terms of biological role, part of the ABC transporter complex NikABCDE involved in nickel import. Responsible for energy coupling to the transport system. In Shigella dysenteriae serotype 1 (strain Sd197), this protein is Nickel import ATP-binding protein NikD.